A 623-amino-acid chain; its full sequence is tRNA uridine 5-carboxymethylaminomethyl modification enzyme MnmG (623 aa).

12–17 (GAGHAG) is a binding site for FAD. 272–286 (GPRYCPSIEDKINRF) lines the NAD(+) pocket.

This sequence belongs to the MnmG family. In terms of assembly, homodimer. Heterotetramer of two MnmE and two MnmG subunits. FAD is required as a cofactor.

The protein resides in the cytoplasm. Its function is as follows. NAD-binding protein involved in the addition of a carboxymethylaminomethyl (cmnm) group at the wobble position (U34) of certain tRNAs, forming tRNA-cmnm(5)s(2)U34. This chain is tRNA uridine 5-carboxymethylaminomethyl modification enzyme MnmG, found in Christiangramia forsetii (strain DSM 17595 / CGMCC 1.15422 / KT0803) (Gramella forsetii).